The chain runs to 456 residues: Cysteine--tRNA ligase (456 aa).

Zn(2+) is bound at residue Cys28. A 'HIGH' region motif is present at residues 30–40 (ITVYDHCHLGH). Zn(2+) contacts are provided by Cys209, His234, and Glu238. The 'KMSKS' region signature appears at 266–270 (KMAKS). ATP is bound at residue Lys269.

This sequence belongs to the class-I aminoacyl-tRNA synthetase family. Monomer. Zn(2+) is required as a cofactor.

Its subcellular location is the cytoplasm. It carries out the reaction tRNA(Cys) + L-cysteine + ATP = L-cysteinyl-tRNA(Cys) + AMP + diphosphate. This chain is Cysteine--tRNA ligase, found in Legionella pneumophila subsp. pneumophila (strain Philadelphia 1 / ATCC 33152 / DSM 7513).